The primary structure comprises 720 residues: Cyclopenase penL (720 aa).

3 residues coordinate Cu cation: histidine 137, histidine 141, and histidine 313.

The protein belongs to the tyrosinase family. Cu(2+) serves as cofactor.

The enzyme catalyses (-)-cyclopenine = viridicatin + methyl isocyanate + H(+). The catalysed reaction is (-)-4'-methoxycyclopenine = 4'-methoxyviridicatin + methyl isocyanate + H(+). It functions in the pathway secondary metabolite biosynthesis. It participates in alkaloid biosynthesis. The protein operates within mycotoxin biosynthesis. In terms of biological role, cyclopenase; part of the gene cluster that mediates the biosynthesis of penigequinolones, potent insecticidal alkaloids that contain a highly modified 10-carbon prenyl group. The first stage is catalyzed by the nonribosomal peptide synthetase penN that condenses anthranilic acid and O-methyl-L-tyrosine to produce 4'-methoxycyclopeptin. 4'-methoxycyclopeptin is then converted to 4'-methoxydehydrocyclopeptin by the ketoglutarate-dependent dioxygenase penM through dehydrogenation to form a double bond between C-alpha and C-beta of the O-methyltyrosine side chain. PenM also converts its first product methoxydehydrocyclopeptin to 4'-methoxycyclopenin. The following conversion of 4'methoxycyclopenin into 4'-methoxyviridicatin is catalyzed by the cyclopenase penL. 4'-methoxyviridicatin is the precursor of quinolone natural products, and is further converted to quinolinone B. The prenyltransferase penI then catalyzes the canonical Friedel-Crafts alkylation of quinolinone B with dimethylallyl cation to yield dimethylallyl quinolone, which is subjected to FAD-dependent dehydrogenation by the FAD-linked oxidoreductase penH to yield conjugated aryl diene. The delta(3') double bond then serves as the site of the second alkylation with DMAPP catalyzed by the prenyltransferase penG to yield a carbenium ion intermediate, which can be attacked by H(2)O to yield a styrenyl quinolone containing a C3'-hydroxyprenyl chain, or undergo cyclization to yield yaequinolones J1 and J2. The conversion of the styrenyl quinolone into the tetrahydrofuran-containing yaequinolone C is performed by the FAD-dependent monooxygenase penE and involves epoxidation of the terminal C7'-C8' olefin, followed by epoxide ring opening initiated by the C3' hydroxyl group. The predicted cysteine hydrolase penJ acts as an epoxide hydrolase that enhances the rate of the 5-exo-tet cyclization step, increasing the yield of yaequinolone C. PenF catalyzes the cationic rearrangement of the epoxide formed by penE (before ring opening to produce yaequinolone C) into yaequinolone D. Finally, the short-chain dehydrogenase/reductase (SDR)-like reductase penD, catalyzes both the dehydration of yaequinolone D and the reduction of the resulting oxonium to yield penigequinolone. This chain is Cyclopenase penL, found in Penicillium thymicola.